The sequence spans 430 residues: von Willebrand factor (430 aa).

N-linked (GlcNAc...) asparagine glycosylation occurs at N6. Cysteines 9 and 12 form a disulfide. 3 O-linked (GalNAc...) threonine glycosylation sites follow: T23, T30, and T31. C47 and C233 are disulfide-bonded. The VWFA 1; binding site for platelet glycoprotein Ib domain occupies 52 to 228 (DLVFLLDGSY…DELEQRRDEI (177 aa)). A glycan (O-linked (GalNAc...) threonine) is linked at T252. S261 is a glycosylation site (O-linked (GalNAc...) serine). A VWFA 2 domain is found at 273–430 (DVVFVLEASD…ITPIFIQDFE (158 aa)). N290 and N349 each carry an N-linked (GlcNAc...) asparagine glycan.

In terms of assembly, multimeric. Interacts with F8. Post-translationally, N- and O-glycosylated. Plasma.

The protein resides in the secreted. It is found in the extracellular space. The protein localises to the extracellular matrix. Functionally, important in the maintenance of hemostasis, it promotes adhesion of platelets to the sites of vascular injury by forming a molecular bridge between sub-endothelial collagen matrix and platelet-surface receptor complex GPIb-IX-V. Also acts as a chaperone for coagulation factor VIII, delivering it to the site of injury, stabilizing its heterodimeric structure and protecting it from premature clearance from plasma. This Rattus norvegicus (Rat) protein is von Willebrand factor.